The primary structure comprises 85 residues: Large ribosomal subunit protein bL27 (85 aa).

It belongs to the bacterial ribosomal protein bL27 family.

The sequence is that of Large ribosomal subunit protein bL27 from Pseudomonas fluorescens (strain ATCC BAA-477 / NRRL B-23932 / Pf-5).